We begin with the raw amino-acid sequence, 528 residues long: Protein phosphatase 1 regulatory subunit 16A (528 aa).

A coiled-coil region spans residues Ser18–Gln45. The disordered stretch occupies residues Thr19–Ala59. Basic and acidic residues predominate over residues Ala40–Ala58. 5 ANK repeats span residues Pro70 to Leu99, Asp103 to Ala132, Glu136 to Ala165, His231 to Ala260, and Asp264 to Ala293. Disordered stretches follow at residues Arg330–Arg351 and Gln367–Arg421. Ser433 is modified (phosphoserine). The disordered stretch occupies residues Gln462–Pro505. Cys524 carries the S-palmitoyl cysteine lipid modification. Cys525 carries the post-translational modification Cysteine methyl ester. Residue Cys525 is the site of S-farnesyl cysteine attachment. The propeptide at Leu526–Met528 is removed in mature form.

Binds PP1.

It is found in the cell membrane. Functionally, inhibits protein phosphatase 1 activity toward phosphorylase, myosin light chain and myosin substrates. This is Protein phosphatase 1 regulatory subunit 16A (PPP1R16A) from Homo sapiens (Human).